The primary structure comprises 545 residues: Glucose-6-phosphate isomerase (545 aa).

The active-site Proton donor is the E351. Residues H382 and K510 contribute to the active site.

The protein belongs to the GPI family.

Its subcellular location is the cytoplasm. It catalyses the reaction alpha-D-glucose 6-phosphate = beta-D-fructose 6-phosphate. The protein operates within carbohydrate biosynthesis; gluconeogenesis. It functions in the pathway carbohydrate degradation; glycolysis; D-glyceraldehyde 3-phosphate and glycerone phosphate from D-glucose: step 2/4. Functionally, catalyzes the reversible isomerization of glucose-6-phosphate to fructose-6-phosphate. This chain is Glucose-6-phosphate isomerase, found in Shewanella baltica (strain OS195).